Here is a 323-residue protein sequence, read N- to C-terminus: Phospho-N-acetylmuramoyl-pentapeptide-transferase (323 aa).

9 helical membrane passes run N3 to I23, M52 to L72, M77 to W97, I121 to H141, I145 to F165, L175 to W195, I200 to N220, I226 to H248, and I301 to L321.

It belongs to the glycosyltransferase 4 family. MraY subfamily. Mg(2+) is required as a cofactor.

The protein localises to the cell membrane. The enzyme catalyses UDP-N-acetyl-alpha-D-muramoyl-L-alanyl-gamma-D-glutamyl-L-lysyl-D-alanyl-D-alanine + di-trans,octa-cis-undecaprenyl phosphate = Mur2Ac(oyl-L-Ala-gamma-D-Glu-L-Lys-D-Ala-D-Ala)-di-trans,octa-cis-undecaprenyl diphosphate + UMP. It functions in the pathway cell wall biogenesis; peptidoglycan biosynthesis. In terms of biological role, catalyzes the initial step of the lipid cycle reactions in the biosynthesis of the cell wall peptidoglycan: transfers peptidoglycan precursor phospho-MurNAc-pentapeptide from UDP-MurNAc-pentapeptide onto the lipid carrier undecaprenyl phosphate, yielding undecaprenyl-pyrophosphoryl-MurNAc-pentapeptide, known as lipid I. This Levilactobacillus brevis (strain ATCC 367 / BCRC 12310 / CIP 105137 / JCM 1170 / LMG 11437 / NCIMB 947 / NCTC 947) (Lactobacillus brevis) protein is Phospho-N-acetylmuramoyl-pentapeptide-transferase.